The chain runs to 482 residues: MAKPTVVVLPVWGAGHFMPMIEAGKRLLRGSGGALSVTVLLMPAPTPDAAVDIAAQVKREEASGADDISFRHLPAVDMPTGHTGVEEWISRILRSHAPNVWAAIAGLDCPVAALVTDIFCTPALEVSRELGVPGYVYFPCSASMLALLLRSPGLDEEVAVEFEEMDGAIRIPGLPPVPPSALPSTMLDRKKSTYDWFVATGRGYMNATGVIVNTAAELEQSVLAAIADGRCTRGVPAPTVYPIGPVLSFPPPPEEQPHECVRWLDAQPPASVLFLCFGSKGLLPPPKVREIAAALERSGGHRFLWVLRGPPKDSRQGQRVPTDAMLDELLPEGFLERTKGRGLVWPTRAPQKEILAHAAVGGFVTHCGWNSILESLWFGVPVLPWPLDAEQHFNAFTLVAHLGVAVPLGMDRRRDNFVEAAELERAVRSLMDDASDEGRKARAKAAETRAVCRKAVEEGGSSSTAFQRLTDDIVRRGAVQIR.

His-16 acts as the Proton acceptor in catalysis. Asp-117 functions as the Charge relay in the catalytic mechanism. Residues Ser-279, Trp-345, Ala-349, His-366, Asn-370, Ser-371, and Glu-374 each contribute to the UDP site.

Belongs to the UDP-glycosyltransferase family. As to expression, highly expressed in leaves, sheaths, pistils and embryos, observed in stems, stem nodes and panicles, and present at low levels in roots.

The protein localises to the endoplasmic reticulum. The protein resides in the nucleus. The enzyme catalyses malvidin + UDP-alpha-D-galactose = malvidin 3-O-beta-D-galactoside + UDP + H(+). It functions in the pathway pigment biosynthesis; anthocyanin biosynthesis. UDP-glycosyltransferase which uses UDP-galactose and malvidin as substrates to catalyze the biosynthesis of malvidin 3-O-galactoside, an anthocyanin conferring purple pigmentation. This is Malvidin galactosylase UGT88C3 from Oryza sativa subsp. japonica (Rice).